Reading from the N-terminus, the 382-residue chain is uncharacterized protein (382 aa).

The next 12 helical transmembrane spans lie at 14–34 (GLLLLTLAIAVLNTLVPLWLA), 45–65 (VVSSSYFTGNLVGTLLTGYVI), 79–99 (FIFAAGCAGLGLMIGFWSWLA), 102–122 (FVAGVGCAMIWVVVESALMCS), 131–151 (LLAAYMMVYYVGTFLGQLLVS), 157–177 (LMSVLPWVTGLTLAGILPLLF), 204–224 (LGVNGCIISGIVLGSLYGLMP), 235–255 (ASIGFWMAVLVSAGILGQWPI), 270–290 (VQVFVVILGSIAMLSQAAMAP), 291–311 (ALFILGAAGFTLYPVAMAWAC), 325–345 (ALLLSYTVGSLLGPSFTAMLM), and 348–368 (FSDNLLFIMIASVSFIYLLML).

It belongs to the major facilitator superfamily. YcaD (TC 2.A.1.26) family.

Its subcellular location is the cell inner membrane. This is an uncharacterized protein from Escherichia coli (strain K12 / MC4100 / BW2952).